Here is a 974-residue protein sequence, read N- to C-terminus: MVTTYIKSDLQLDGRQFFQPKDNLKMAELFMECEEEELEPWQKKVKEVEEDDDDEPIFVAEIASSKPAISNILNRVNPSSHSRGIKNGILNRGFTASFKPTSQRCLNSASNPVAALPVNFHPESRSSDSSVIVQPFSKPGYVTNSPRVLSNNSSELLFDLTQDTGLSHYQGGPTLSIAGLNETSFLSKRPSGSDISSVNPKKPKPSENTSGIDASSVISSEKSPSVISLQVVPSQGANCSSSQSKNGTTFPRACPKCDIHFNLLDPLKNHMTYCCPDMINNFLGLTKADNLNSANEAKTLESEKGKLIMLVNDFYYGKHEGDVLEEQKTHTTFKCFSCLKVLKNNIRFMNHMKHHLELEKQSSESWEKHTTCQHCYRQFPTPFQLQCHIESTHTPHEFSTICKICELSFETEQILLQHMKDNHKPGEMPYICQVCNYRSSLFSEVESHFRTSHENTKNLLCPFCLKVIKIATPYMHHYMKHQKKGIHRCTKCRLQFLTCKEKMDHKTQHHRTFVKPKQLEGLPPGTKVTIRASVGPLQSGSSVTPSISPSTSTLQLSPPEPDNVTAKNHVKLTTSTPNTTISDPSKANETKSNGSKSKNKSKVSNMQKKQSTLSSSNKKSKVNTALRNLRLRRGVHECIECSSEVKDFANHFPTYVHCSFCRYNTSCSKAYVNHMMSFHSNRPSKRYCIFKKHSENLRGISLVCLNCDFLTDVSGLDNMATHLSQHETHSCRVLVEQVSVCIPTSERLSEIKTEAPTKGQEPVSKETARHSRAEGEPGASHSGSKQDKVPSSEEGTGCDASVCEAAAATHCEKDVTVSDTENVSSSKNILSHDPDVGTDTMEKEEKTHHACQEMELKVDQSSESTNPTEAELSSETRQGLQLTSGDVGIDQFLRQGDEPKSVNSDASDPGSVRLEPLTPSEVLEYEATEILHDGDDPSANTSDTVSDQTGGSPGGSNPCRAETAVDLADGEERS.

Glycyl lysine isopeptide (Lys-Gly) (interchain with G-Cter in SUMO2) cross-links involve residues K44, K46, K86, K99, K138, K201, K222, K245, K287, and K304. Residues 188–216 (KRPSGSDISSVNPKKPKPSENTSGIDASS) form a disordered region. C2H2-type zinc fingers lie at residues 333-355 (FKCF…MKHH) and 370-393 (TTCQ…ESTH). The segment at 400–424 (TICKICELSFETEQILLQHMKDNHK) adopts a C2H2-type 3; degenerate zinc-finger fold. 2 C2H2-type zinc fingers span residues 430–453 (YICQ…RTSH) and 459–481 (LLCP…YMKH). Disordered regions lie at residues 507–624 (TQHH…KVNT), 751–797 (IKTE…EGTG), and 815–974 (VTVS…EERS). Over residues 539-557 (SGSSVTPSISPSTSTLQLS) the composition is skewed to low complexity. S557 carries the phosphoserine modification. A compositionally biased stretch (polar residues) spans 571-587 (KLTTSTPNTTISDPSKA). Low complexity predominate over residues 591–611 (KSNGSKSKNKSKVSNMQKKQS). Positions 612 to 624 (TLSSSNKKSKVNT) are enriched in polar residues. K752 participates in a covalent cross-link: Glycyl lysine isopeptide (Lys-Gly) (interchain with G-Cter in SUMO2). Basic and acidic residues predominate over residues 763 to 775 (VSKETARHSRAEG). Residues 817 to 829 (VSDTENVSSSKNI) show a composition bias toward polar residues. Residues 830-860 (LSHDPDVGTDTMEKEEKTHHACQEMELKVDQ) show a composition bias toward basic and acidic residues. Positions 861–884 (SSESTNPTEAELSSETRQGLQLTS) are enriched in polar residues. 2 positions are modified to phosphoserine: S904 and S907. Over residues 938–950 (SANTSDTVSDQTG) the composition is skewed to polar residues.

It is found in the nucleus. Its function is as follows. May function as a transcription factor. The chain is Zinc finger protein 280D (Znf280d) from Mus musculus (Mouse).